The chain runs to 23 residues: GLLQTIKEKLKEFAGGVVTGVQS.

This sequence belongs to the frog skin active peptide (FSAP) family. Aurein subfamily. As to expression, expressed by the skin dorsal glands.

It is found in the secreted. Its function is as follows. Has no antimicrobial or anticancer activity. This is Aurein-4.2 from Ranoidea aurea (Green and golden bell frog).